A 445-amino-acid polypeptide reads, in one-letter code: ATP-dependent protease ATPase subunit HslU (445 aa).

ATP-binding positions include I17, G59–E64, D254, E319, and R391.

This sequence belongs to the ClpX chaperone family. HslU subfamily. A double ring-shaped homohexamer of HslV is capped on each side by a ring-shaped HslU homohexamer. The assembly of the HslU/HslV complex is dependent on binding of ATP.

It localises to the cytoplasm. Functionally, ATPase subunit of a proteasome-like degradation complex; this subunit has chaperone activity. The binding of ATP and its subsequent hydrolysis by HslU are essential for unfolding of protein substrates subsequently hydrolyzed by HslV. HslU recognizes the N-terminal part of its protein substrates and unfolds these before they are guided to HslV for hydrolysis. The protein is ATP-dependent protease ATPase subunit HslU of Pseudomonas fluorescens (strain Pf0-1).